Reading from the N-terminus, the 508-residue chain is Maturase K (508 aa).

This sequence belongs to the intron maturase 2 family. MatK subfamily.

The protein localises to the plastid. It localises to the chloroplast. Usually encoded in the trnK tRNA gene intron. Probably assists in splicing its own and other chloroplast group II introns. The polypeptide is Maturase K (Stewartia pseudocamellia (Japanese stewartia)).